A 296-amino-acid polypeptide reads, in one-letter code: MFARIARINPKILPFVIGAPTIALCSYYYSSGAFLRNESSKVFIGDNNWIDLPISRIEEISHDTKRFTFKYPSQDSVSGLVVASALLTKFVTPKGSNVIRPYTPVSDVDEKGSLDLVIKHYPDGKMTNHIFSLKVNDTLSFKGPIPKWKWVPNSFESITLIGGGTGITPLYQLIHAITKNPNDKTKIRLFYSNKTSQDVLMKKELDELQAKYPDQLRITYFITTPDKGYKGESGFISKEFIASNADKPSPKSHVFVCGPPPFMNAYSGDKKSPTDQGELVGILKELGYTIDQVYKF.

A helical transmembrane segment spans residues 15–35; the sequence is FVIGAPTIALCSYYYSSGAFL. Residues 47–151 enclose the FAD-binding FR-type domain; that stretch reads NNWIDLPISR…KGPIPKWKWV (105 aa). 154–189 contacts FAD; sequence SFESITLIGGGTGITPLYQLIHAITKNPNDKTKIRL.

It belongs to the flavoprotein pyridine nucleotide cytochrome reductase family. FAD is required as a cofactor.

The protein resides in the mitochondrion outer membrane. The enzyme catalyses 2 Fe(III)-[cytochrome b5] + NADH = 2 Fe(II)-[cytochrome b5] + NAD(+) + H(+). Its function is as follows. May mediate the reduction of outer membrane cytochrome b5. This is NADH-cytochrome b5 reductase 2-A (MCR1A) from Vanderwaltozyma polyspora (strain ATCC 22028 / DSM 70294 / BCRC 21397 / CBS 2163 / NBRC 10782 / NRRL Y-8283 / UCD 57-17) (Kluyveromyces polysporus).